Reading from the N-terminus, the 146-residue chain is Small ribosomal subunit protein uS5 (146 aa).

The 64-residue stretch at phenylalanine 8–valine 71 folds into the S5 DRBM domain.

It belongs to the universal ribosomal protein uS5 family. Part of the 30S ribosomal subunit. Contacts proteins S4 and S8.

Its function is as follows. With S4 and S12 plays an important role in translational accuracy. Functionally, located at the back of the 30S subunit body where it stabilizes the conformation of the head with respect to the body. The protein is Small ribosomal subunit protein uS5 of Sulfurimonas denitrificans (strain ATCC 33889 / DSM 1251) (Thiomicrospira denitrificans (strain ATCC 33889 / DSM 1251)).